The sequence spans 22 residues: Cytin chain B (22 aa).

Belongs to the protease inhibitor I13 (potato type I serine protease inhibitor) family. As to quaternary structure, heterodimer of an A chain and a B chain, linked by a disulfide bond.

Its function is as follows. Inhibitor of chymotrypsin. This is Cytin chain B from Theromyzon tessulatum (Duck leech).